The following is a 330-amino-acid chain: GTPase Obg (330 aa).

In terms of domain architecture, Obg spans 1-159 (MHFIDEVKIY…MWIHLSLKLL (159 aa)). The OBG-type G domain occupies 160–327 (SDVGLVGFPN…IVKLALETIK (168 aa)). Residues 166 to 173 (GFPNAGKS), 191 to 195 (FTTLV), 212 to 215 (DIPG), 279 to 282 (NKCD), and 308 to 310 (STY) each bind GTP. Residues serine 173 and threonine 193 each contribute to the Mg(2+) site.

The protein belongs to the TRAFAC class OBG-HflX-like GTPase superfamily. OBG GTPase family. As to quaternary structure, monomer. Requires Mg(2+) as cofactor.

It localises to the cytoplasm. Functionally, an essential GTPase which binds GTP, GDP and possibly (p)ppGpp with moderate affinity, with high nucleotide exchange rates and a fairly low GTP hydrolysis rate. Plays a role in control of the cell cycle, stress response, ribosome biogenesis and in those bacteria that undergo differentiation, in morphogenesis control. The chain is GTPase Obg from Rickettsia massiliae (strain Mtu5).